The following is a 194-amino-acid chain: Adenylate kinase (194 aa).

11-16 (GSGKGT) is an ATP binding site. Positions 31-60 (STGELLRAEIKAQTELGQAAAGYINEGHLV) are NMP. AMP is bound by residues Thr-32, Arg-37, 58 to 60 (HLV), 86 to 89 (GFPR), and Gln-93. Residues 127-137 (NRGKVSGRSDD) form an LID region. An ATP-binding site is contributed by Arg-128. The AMP site is built by Arg-134 and Arg-145. Residue Gly-173 participates in ATP binding.

Belongs to the adenylate kinase family. As to quaternary structure, monomer.

The protein resides in the cytoplasm. The catalysed reaction is AMP + ATP = 2 ADP. Its pathway is purine metabolism; AMP biosynthesis via salvage pathway; AMP from ADP: step 1/1. In terms of biological role, catalyzes the reversible transfer of the terminal phosphate group between ATP and AMP. Plays an important role in cellular energy homeostasis and in adenine nucleotide metabolism. The polypeptide is Adenylate kinase (Porphyromonas gingivalis (strain ATCC BAA-308 / W83)).